The sequence spans 194 residues: Small ribosomal subunit protein uS4c (194 aa).

Residues 82-143 (MRLDNILFRL…KERSKVLIQN (62 aa)) enclose the S4 RNA-binding domain.

It belongs to the universal ribosomal protein uS4 family. In terms of assembly, part of the 30S ribosomal subunit. Contacts protein S5. The interaction surface between S4 and S5 is involved in control of translational fidelity.

It localises to the plastid. It is found in the chloroplast. In terms of biological role, one of the primary rRNA binding proteins, it binds directly to 16S rRNA where it nucleates assembly of the body of the 30S subunit. With S5 and S12 plays an important role in translational accuracy. The polypeptide is Small ribosomal subunit protein uS4c (rps4) (Cypella sp. (strain Porto Alegre 027)).